The chain runs to 353 residues: Aliphatic aldoxime dehydratase (353 aa).

Residue Ser219 coordinates an aliphatic aldoxime. His299 contributes to the heme b binding site. His320 is an an aliphatic aldoxime binding site. Residue His320 is part of the active site.

Belongs to the heme-containing dehydratase family. Homodimer. Heme b serves as cofactor.

It carries out the reaction an aliphatic aldoxime = a nitrile + H2O. Its activity is regulated as follows. Active when the heme iron is in the ferrous state. The activity is enhanced by reducing agents, such as Na(2)S, Na(2)S(2)(O4), 2-mercaptoethanol, and L-cysteine and supplementary additions of electron acceptors such as flavins, sulfite ion, and vitamin K3. The effect of various chemicals on the enzyme activity is different in the presence and absence of the reducing reagent, Na(2)S, which acts not only as a reductant but also changes the substrate specificity of the enzyme. Its function is as follows. Catalyzes the dehydration of aldoximes to their corresponding nitrile. Is active toward various arylalkyl- and alkyl-aldoximes, and to a lesser extent toward aryl-aldoximes. This is Aliphatic aldoxime dehydratase from Rhodococcus erythropolis (Arthrobacter picolinophilus).